A 478-amino-acid chain; its full sequence is Glycogen synthase (478 aa).

Lys-15 serves as a coordination point for ADP-alpha-D-glucose.

It belongs to the glycosyltransferase 1 family. Bacterial/plant glycogen synthase subfamily.

It carries out the reaction [(1-&gt;4)-alpha-D-glucosyl](n) + ADP-alpha-D-glucose = [(1-&gt;4)-alpha-D-glucosyl](n+1) + ADP + H(+). It participates in glycan biosynthesis; glycogen biosynthesis. Its function is as follows. Synthesizes alpha-1,4-glucan chains using ADP-glucose. The chain is Glycogen synthase from Enterobacter sp. (strain 638).